The chain runs to 202 residues: Na(+)-translocating NADH-quinone reductase subunit E (202 aa).

6 helical membrane-spanning segments follow: residues 11–31, 35–55, 81–101, 114–134, 144–164, and 180–200; these read AIFV…FLAI, IEAA…TVPV, FLGL…MEMV, GVFL…LFMV, LVYG…LAGI, and LGIT…FSGI.

It belongs to the NqrDE/RnfAE family. In terms of assembly, composed of six subunits; NqrA, NqrB, NqrC, NqrD, NqrE and NqrF.

It localises to the cell inner membrane. The catalysed reaction is a ubiquinone + n Na(+)(in) + NADH + H(+) = a ubiquinol + n Na(+)(out) + NAD(+). Functionally, NQR complex catalyzes the reduction of ubiquinone-1 to ubiquinol by two successive reactions, coupled with the transport of Na(+) ions from the cytoplasm to the periplasm. NqrA to NqrE are probably involved in the second step, the conversion of ubisemiquinone to ubiquinol. The polypeptide is Na(+)-translocating NADH-quinone reductase subunit E (Marinobacter nauticus (strain ATCC 700491 / DSM 11845 / VT8) (Marinobacter aquaeolei)).